A 399-amino-acid polypeptide reads, in one-letter code: MISSQEAFEEIKRGAVEIIHEDELLSRLAEEKPLRIKLGFDPTAPDIHLGHTVVLNKLRQFQTLGHEVIFLIGDFTAMIGDPTGKNITRQPLTREIVMENTKTYETQAFRILDPDKTQVTSNSTWINKLKADDLVRLAATYTVARMLERDDFNKRYLSQQPIAIHEFLYPLLQGYDSVALKADVELGGTDQKFNLLVGRELQKHFGQRPQCVLTVPLLEGLDGIQKMSKSLNNYIGITEPPEEMFGKVMSISDELMWRYYELLSFRPMREINRWREEVSEGRNPRDIKILLAEELVTRFHSKEAATKAHQHFIDRFKRHELPTDLDEIELTAENTHLTIGYILQRAGLVNTTSEGLRMIAQGAVRIDGERVEDIKLAIPRGESHLFQVGKRRFAKVKVI.

A 'HIGH' region motif is present at residues Pro42–His51. Residues Lys226–Ser230 carry the 'KMSKS' region motif. Position 229 (Lys229) interacts with ATP. One can recognise an S4 RNA-binding domain in the interval Leu337–Val398.

This sequence belongs to the class-I aminoacyl-tRNA synthetase family. TyrS type 2 subfamily. Homodimer.

The protein localises to the cytoplasm. It catalyses the reaction tRNA(Tyr) + L-tyrosine + ATP = L-tyrosyl-tRNA(Tyr) + AMP + diphosphate + H(+). Functionally, catalyzes the attachment of tyrosine to tRNA(Tyr) in a two-step reaction: tyrosine is first activated by ATP to form Tyr-AMP and then transferred to the acceptor end of tRNA(Tyr). The sequence is that of Tyrosine--tRNA ligase from Coxiella burnetii (strain RSA 493 / Nine Mile phase I).